A 383-amino-acid polypeptide reads, in one-letter code: UPF0425 pyridoxal phosphate-dependent protein Msp_0916 (383 aa).

Lys207 carries the N6-(pyridoxal phosphate)lysine modification.

This sequence belongs to the UPF0425 family. Pyridoxal 5'-phosphate serves as cofactor.

In Methanosphaera stadtmanae (strain ATCC 43021 / DSM 3091 / JCM 11832 / MCB-3), this protein is UPF0425 pyridoxal phosphate-dependent protein Msp_0916.